Consider the following 363-residue polypeptide: NudC domain-containing protein 3 (363 aa).

The segment at 120-143 is disordered; sequence AADLSGPQEVEKEEPPGSQDPEHT. Residues 128–143 are compositionally biased toward basic and acidic residues; the sequence is EVEKEEPPGSQDPEHT. The CS domain occupies 187 to 279; that stretch reads AIRENYIWSQ…VGEYWWSAIL (93 aa). Residues S342 and S357 each carry the phosphoserine modification.

The chain is NudC domain-containing protein 3 (Nudcd3) from Mus musculus (Mouse).